A 506-amino-acid polypeptide reads, in one-letter code: 2-isopropylmalate synthase (506 aa).

One can recognise a Pyruvate carboxyltransferase domain in the interval 4 to 266; sequence ILFMDTTLRD…EPSMTLKEIK (263 aa). 4 residues coordinate Mn(2+): D13, H201, H203, and N237. Positions 390–506 are regulatory domain; it reads NITQLQVHFV…KLKSFIQLVK (117 aa).

This sequence belongs to the alpha-IPM synthase/homocitrate synthase family. LeuA type 1 subfamily. As to quaternary structure, homodimer. The cofactor is Mn(2+).

The protein resides in the cytoplasm. It catalyses the reaction 3-methyl-2-oxobutanoate + acetyl-CoA + H2O = (2S)-2-isopropylmalate + CoA + H(+). Its pathway is amino-acid biosynthesis; L-leucine biosynthesis; L-leucine from 3-methyl-2-oxobutanoate: step 1/4. Functionally, catalyzes the condensation of the acetyl group of acetyl-CoA with 3-methyl-2-oxobutanoate (2-ketoisovalerate) to form 3-carboxy-3-hydroxy-4-methylpentanoate (2-isopropylmalate). This Bacillus cereus (strain ZK / E33L) protein is 2-isopropylmalate synthase.